Consider the following 511-residue polypeptide: Ribonuclease Y (511 aa).

Residues 2–22 (ITTVIIAIVCFAVGGGLSYML) traverse the membrane as a helical segment. The 61-residue stretch at 201 to 261 (SVTVFHIESD…VRREIARLAL (61 aa)) folds into the KH domain. The region spanning 327-420 (LLQHARETAN…VQVCDAISGA (94 aa)) is the HD domain.

It belongs to the RNase Y family.

The protein localises to the cell membrane. Its function is as follows. Endoribonuclease that initiates mRNA decay. This is Ribonuclease Y from Phocaeicola vulgatus (strain ATCC 8482 / DSM 1447 / JCM 5826 / CCUG 4940 / NBRC 14291 / NCTC 11154) (Bacteroides vulgatus).